A 379-amino-acid chain; its full sequence is tRNA (guanine(26)-N(2))-dimethyltransferase (379 aa).

The region spanning 4–375 (VEVLEGKAKI…APYEVFVNVL (372 aa)) is the Trm1 methyltransferase domain. S-adenosyl-L-methionine is bound by residues R36, R61, D78, D120, and A121.

Belongs to the class I-like SAM-binding methyltransferase superfamily. Trm1 family.

It carries out the reaction guanosine(26) in tRNA + 2 S-adenosyl-L-methionine = N(2)-dimethylguanosine(26) in tRNA + 2 S-adenosyl-L-homocysteine + 2 H(+). Functionally, dimethylates a single guanine residue at position 26 of a number of tRNAs using S-adenosyl-L-methionine as donor of the methyl groups. The protein is tRNA (guanine(26)-N(2))-dimethyltransferase of Pyrococcus abyssi (strain GE5 / Orsay).